The sequence spans 1211 residues: Endoplasmic reticulum transmembrane helix translocase (1211 aa).

At 1–23 (MGSKALITSPDISSGQLYIKLPT) the chain is on the cytoplasmic side. The chain crosses the membrane as a helical span at residues 24–44 (FFHLYVWPFALFVYPYIGYVY). Topologically, residues 45–54 (QNKLYSEEVR) are lumenal. Residues 55–75 (YLTYIAVGTIHALFWLAGEWN) traverse the membrane as a helical segment. Topologically, residues 76–191 (TKVYCLMTCR…FDIPIPTFGT (116 aa)) are cytoplasmic. The A-domain; part 1 stretch occupies residues 155–185 (TIGTLKKSTGLTNIQSEIFLYRYGKNCFDIP). A helical membrane pass occupies residues 192-212 (LFKEHAVAPFFVFQIFCCVLW). The Lumenal portion of the chain corresponds to 213–216 (CLDD). The helical transmembrane segment at 217–237 (YWYFSLFSMFMIIALECSVVW) threads the bilayer. Residues 238 to 397 (QRQRTLTEFR…EKVTANNRES (160 aa)) are Cytoplasmic-facing. The tract at residues 250 to 388 (SIKPYEIQVY…LVRTMVFSSE (139 aa)) is A-domain; part 2. A helical membrane pass occupies residues 398–418 (LYFILFLLVFAIAASGYVWHV). Residues 419–1057 (GSKTERSRYK…KERPQAGIFN (639 aa)) are Lumenal-facing. The P-domain; part 1 stretch occupies residues 464–493 (YIYCTEPFRIPLSGHLDICCFDKTGTLTEE). D485 (4-aspartylphosphate intermediate) is an active-site residue. Residues D485 and T487 each contribute to the Mg(2+) site. ATP-binding positions include 485 to 487 (DKT), F587, R644, D710, and 824 to 828 (DGTND). Residues 495–685 (MVVQGIAGVN…FAGFLIFTSP (191 aa)) form an N-domain region. Residues 688–845 (EDARQTVQML…HVGVALLNAS (158 aa)) are P-domain; part 2. D824 contributes to the Mg(2+) binding site. The tract at residues 846 to 955 (EEDMLEMQER…NASDDEAPKL (110 aa)) is arm-like. The tract at residues 956 to 971 (KLGDASVAAPFTSKLA) is P-domain; part 3. A helical transmembrane segment spans residues 1058–1078 (TYIIGSVLGQFAIHIVTLIYI). The Cytoplasmic segment spans residues 1079 to 1100 (TRVVYLYEDPLEKVDLEETFKP). Residues 1101–1121 (SLLNTAIYLLQLIQQVSTFAI) traverse the membrane as a helical segment. At 1122–1136 (NYQGRPFREALSENK) the chain is on the lumenal side. A helical transmembrane segment spans residues 1137–1157 (GMYYGLLGIAFVAIAGVTEFS). The Cytoplasmic segment spans residues 1158-1174 (PELNAKLQLVKMAYNFQ). The helical transmembrane segment at 1175–1195 (IQLLATMVVDYAACWIIEELM) threads the bilayer. At 1196–1211 (KKYFRDNKPKEIVLRN) the chain is on the lumenal side.

The protein belongs to the cation transport ATPase (P-type) (TC 3.A.3) family. Type V subfamily. Mg(2+) is required as a cofactor.

It is found in the endoplasmic reticulum membrane. The enzyme catalyses [protein]-with a C-terminal TM segment(out) + ATP + H2O = [protein]-with a C-terminal TM segment(in) + ADP + phosphate + H(+). In terms of biological role, endoplasmic reticulum translocase required to remove mitochondrial transmembrane proteins mistargeted to the endoplasmic reticulum. Acts as a dislocase that mediates the ATP-dependent extraction of mislocalized mitochondrial transmembrane proteins from the endoplasmic reticulum membrane. Specifically binds mitochondrial tail-anchored transmembrane proteins: has an atypically large substrate-binding pocket that recognizes and binds moderately hydrophobic transmembranes with short hydrophilic lumenal domains. Involved in controlling nuclear calcium ion levels. Required for cytokinesis and stabilizing microtubules. Required for assembly of the forespore membrane. Involved in calcium transport to the endoplasmic reticulum. In Schizosaccharomyces pombe (strain 972 / ATCC 24843) (Fission yeast), this protein is Endoplasmic reticulum transmembrane helix translocase.